A 235-amino-acid polypeptide reads, in one-letter code: Methylosome subunit pICln (235 aa).

Positions 1-21 are disordered; it reads MSFLKSFPPPGSAEGLRQQQP. Position 2 is an N-acetylserine (Ser-2). A phosphoserine mark is found at Ser-100, Ser-142, Ser-191, Ser-193, Ser-196, and Ser-208. The disordered stretch occupies residues 133–157; it reads LHPDPEDEDSDDYDGEEYDVEAHEQ. The segment covering 137–151 has biased composition (acidic residues); it reads PEDEDSDDYDGEEYD. The tract at residues 195–217 is disordered; that stretch reads SSQYNMAGVRTEDSTRDYEDGME. Basic and acidic residues predominate over residues 204-213; sequence RTEDSTRDYE. Thr-221 is modified (phosphothreonine).

Belongs to the pICln (TC 1.A.47) family. Component of the methylosome, a 20S complex containing at least PRMT5/SKB1, WDR77/MEP50 and CLNS1A/pICln. May mediate SNRPD1 and SNRPD3 methylation. Forms a 6S pICln-Sm complex composed of CLNS1A/pICln, SNRPD1, SNRPD2, SNRPE, SNRPF and SNRPG; ring-like structure where CLNS1A/pICln mimics additional Sm proteins and which is unable to assemble into the core snRNP. Interacts with LSM10 and LSM11.

Its subcellular location is the cytoplasm. It is found in the cytosol. The protein resides in the nucleus. It localises to the cytoskeleton. In terms of biological role, involved in both the assembly of spliceosomal snRNPs and the methylation of Sm proteins. Chaperone that regulates the assembly of spliceosomal U1, U2, U4 and U5 small nuclear ribonucleoproteins (snRNPs), the building blocks of the spliceosome, and thereby plays an important role in the splicing of cellular pre-mRNAs. Most spliceosomal snRNPs contain a common set of Sm proteins SNRPB, SNRPD1, SNRPD2, SNRPD3, SNRPE, SNRPF and SNRPG that assemble in a heptameric protein ring on the Sm site of the small nuclear RNA to form the core snRNP (Sm core). In the cytosol, the Sm proteins SNRPD1, SNRPD2, SNRPE, SNRPF and SNRPG are trapped in an inactive 6S pICln-Sm complex by the chaperone CLNS1A that controls the assembly of the core snRNP. Dissociation by the SMN complex of CLNS1A from the trapped Sm proteins and their transfer to an SMN-Sm complex triggers the assembly of core snRNPs and their transport to the nucleus. The sequence is that of Methylosome subunit pICln (CLNS1A) from Canis lupus familiaris (Dog).